A 1548-amino-acid chain; its full sequence is Dicer-like protein 1 (1548 aa).

The span at 1 to 41 (MGDPAAHEMADLERGFSSEDDAEYRSGDDEASKFVENEPSK) shows a compositional bias: basic and acidic residues. The segment at 1–48 (MGDPAAHEMADLERGFSSEDDAEYRSGDDEASKFVENEPSKRGKISQK) is disordered. Residues 106–289 (LFERAKQQNT…QAAIELEGLL (184 aa)) form the Helicase ATP-binding domain. 119 to 126 (LDTGSGKT) serves as a coordination point for ATP. Residues 232-235 (DEAH) carry the DEAH box motif. The Helicase C-terminal domain occupies 428–589 (TLSKLLEEYF…FCNTQPEDRL (162 aa)). The 95-residue stretch at 624 to 718 (SLPILQAFLN…RSKFVEKRHV (95 aa)) folds into the Dicer dsRNA-binding fold domain. Residues 871–1006 (PLLRHVADRD…FVLEPMRISP (136 aa)) form the PAZ domain. 2 consecutive RNase III domains span residues 1051 to 1197 (LTKD…MTTR) and 1248 to 1411 (AQKI…VDSK). 3 residues coordinate Mg(2+): E1288, D1397, and E1400. The DRBM domain maps to 1445–1518 (TFFTQYVFET…ARKALDKLRS (74 aa)). Zn(2+) is bound by residues C1457, H1489, C1530, and C1532.

Belongs to the helicase family. Dicer subfamily. The cofactor is Mg(2+). Mn(2+) is required as a cofactor.

Its function is as follows. Dicer-like endonuclease involved in cleaving double-stranded RNA in the RNA interference (RNAi) pathway. Produces 21 to 25 bp dsRNAs (siRNAs) which target the selective destruction of homologous RNAs leading to sequence-specific suppression of gene expression, called post-transcriptional gene silencing (PTGS). Part of a broad host defense response against viral infection and transposons. In Cryphonectria parasitica (Chestnut blight fungus), this protein is Dicer-like protein 1 (DCL-1).